A 305-amino-acid polypeptide reads, in one-letter code: Glycine--tRNA ligase alpha subunit (305 aa).

This sequence belongs to the class-II aminoacyl-tRNA synthetase family. In terms of assembly, tetramer of two alpha and two beta subunits.

It localises to the cytoplasm. It catalyses the reaction tRNA(Gly) + glycine + ATP = glycyl-tRNA(Gly) + AMP + diphosphate. The sequence is that of Glycine--tRNA ligase alpha subunit from Streptococcus pneumoniae (strain CGSP14).